Consider the following 144-residue polypeptide: tRNA-specific adenosine deaminase (144 aa).

A CMP/dCMP-type deaminase domain is found at 1–116 (MEQALKQAGI…SNLRYFNSSV (116 aa)). His-48 contacts Zn(2+). Glu-50 acts as the Proton donor in catalysis. Cys-78 and Cys-81 together coordinate Zn(2+).

The protein belongs to the cytidine and deoxycytidylate deaminase family. In terms of assembly, homodimer. Zn(2+) serves as cofactor.

The enzyme catalyses adenosine(34) in tRNA + H2O + H(+) = inosine(34) in tRNA + NH4(+). Catalyzes the deamination of adenosine to inosine at the wobble position 34 of tRNA(Arg2). The polypeptide is tRNA-specific adenosine deaminase (Rickettsia felis (strain ATCC VR-1525 / URRWXCal2) (Rickettsia azadi)).